Reading from the N-terminus, the 595-residue chain is Leiomodin-1 (595 aa).

Disordered stretches follow at residues 1-69, 81-322, and 467-568; these read MSKV…EAML, QREM…KVKN, and DKQR…QEKN. Position 12 is a phosphoserine (S12). The segment covering 27-40 has biased composition (acidic residues); sequence EEMEELEKELDVVD. Composition is skewed to basic and acidic residues over residues 81-110, 117-127, 134-192, 200-223, 230-249, 257-287, 467-476, and 484-493; these read QREMSVDESKQVGRKTDAKNGEEKDSDASR, QDSDLGKEPKK, FSRD…EKTG, SRDKDKKKEEVKEPSKKEEVKLTA, GRREDGRLKESSKENKKPED, RDWRKEDEKVKKEENQPDKEVREESKTKAPE, DKQRQKRLQE, and SGEKKDRLEV. A Phosphoserine modification is found at S85. Residue S135 is modified to Phosphoserine. 8 consecutive repeat copies span residues 165 to 179, 180 to 195, 196 to 211, 212 to 226, 227 to 240, 242 to 255, 256 to 271, and 272 to 288. The interval 165-288 is 8 X approximate tandem repeats; the sequence is AAVDRKESGK…EESKTKAPEK (124 aa). Positions 503–522 are 5 X 4 AA approximate tandem repeats; the sequence is SPKPSPQPSPKPAPKNSPKK. Pro residues-rich tracts occupy residues 505 to 517 and 527 to 538; these read KPSPQPSPKPAPK and AAPPPPPPPLAP. S550 is subject to Phosphoserine. The WH2 domain maps to 569-588; sequence SRDQLLAAIRSSNLKQLKKV.

It belongs to the tropomodulin family. As to expression, detected in aorta, urinary bladder and uterus (at protein level). Detected in smooth muscle cells. Detected in aorta, bladder, colon, intestine, stomach and uterus.

It localises to the cytoplasm. The protein resides in the myofibril. Its subcellular location is the sarcomere. The protein localises to the cytoskeleton. Required for proper contractility of visceral smooth muscle cells. Mediates nucleation of actin filaments. The polypeptide is Leiomodin-1 (Lmod1) (Mus musculus (Mouse)).